The sequence spans 113 residues: PTS system fructose-like EIIB component 3 (113 aa).

The 100-residue stretch at 1–100 (MAYLVAVTAC…PQRVMSAVRK (100 aa)) folds into the PTS EIIB type-2 domain. Cys-10 acts as the Phosphocysteine intermediate in catalysis. At Cys-10 the chain carries Phosphocysteine; by EIIA.

Its subcellular location is the cytoplasm. The enzyme catalyses D-fructose(out) + N(pros)-phospho-L-histidyl-[protein] = D-fructose 1-phosphate(in) + L-histidyl-[protein]. The phosphoenolpyruvate-dependent sugar phosphotransferase system (sugar PTS), a major carbohydrate active transport system, catalyzes the phosphorylation of incoming sugar substrates concomitantly with their translocation across the cell membrane. The polypeptide is PTS system fructose-like EIIB component 3 (frwD) (Escherichia coli (strain K12)).